The primary structure comprises 158 residues: RNA pyrophosphohydrolase (158 aa).

One can recognise a Nudix hydrolase domain in the interval P9–E151. A Nudix box motif is present at residues G43–S64.

This sequence belongs to the Nudix hydrolase family. RppH subfamily. A divalent metal cation is required as a cofactor.

Its function is as follows. Accelerates the degradation of transcripts by removing pyrophosphate from the 5'-end of triphosphorylated RNA, leading to a more labile monophosphorylated state that can stimulate subsequent ribonuclease cleavage. The sequence is that of RNA pyrophosphohydrolase from Pelagibacter ubique (strain HTCC1062).